The sequence spans 215 residues: Probable nicotinate-nucleotide adenylyltransferase (215 aa).

The protein belongs to the NadD family.

It catalyses the reaction nicotinate beta-D-ribonucleotide + ATP + H(+) = deamido-NAD(+) + diphosphate. Its pathway is cofactor biosynthesis; NAD(+) biosynthesis; deamido-NAD(+) from nicotinate D-ribonucleotide: step 1/1. Its function is as follows. Catalyzes the reversible adenylation of nicotinate mononucleotide (NaMN) to nicotinic acid adenine dinucleotide (NaAD). This Coxiella burnetii (strain Dugway 5J108-111) protein is Probable nicotinate-nucleotide adenylyltransferase.